The primary structure comprises 278 residues: MALKNYNPTSPARRGLILVDKSGLYKGKPVKSLTEGKRKTGGRNNKGHVTSRGIGGGHKQKYRYIDFKRRKWDVEGTVERIEYDPNRTAFIALVKYDDGELAYIIAPQRLAVGDKVIAAEKADTKPGNAMLLGQMPVGTICHNVEMKPGKGGQIARSAGAYVQLVGRDRGMVIVRLNSGEQRYLRADCMGTVGAVSNPDNQNQNLGKAGRRRWMGVKPLTRGVAKNPVDHPHGGGEGRTSGGRHPVTPWGKPTKGARTRKNKQTDKFIIRSRHAKKKR.

Disordered stretches follow at residues 29 to 53 (PVKSLTEGKRKTGGRNNKGHVTSRG) and 221 to 278 (RGVA…KKKR). Positions 269-278 (IRSRHAKKKR) are enriched in basic residues.

It belongs to the universal ribosomal protein uL2 family. As to quaternary structure, part of the 50S ribosomal subunit. Forms a bridge to the 30S subunit in the 70S ribosome.

Its function is as follows. One of the primary rRNA binding proteins. Required for association of the 30S and 50S subunits to form the 70S ribosome, for tRNA binding and peptide bond formation. It has been suggested to have peptidyltransferase activity; this is somewhat controversial. Makes several contacts with the 16S rRNA in the 70S ribosome. The sequence is that of Large ribosomal subunit protein uL2 from Erythrobacter litoralis (strain HTCC2594).